A 191-amino-acid polypeptide reads, in one-letter code: ECF RNA polymerase sigma-E factor (191 aa).

A binds RNAP core region spans residues 1 to 153; that stretch reads MSEQLTDQVL…MAITLRELDG (153 aa). The interval 25–92 is sigma-70 factor domain-2; the sequence is LVVRYQHKVA…KNYLVAQGRR (68 aa). Residues 48–61 carry the Polymerase core binding motif; that stretch reads DVVQESFIKAYRAL. A sigma-70 factor domain-4 region spans residues 129–180; that stretch reads QIVFRTIESLPEDLRMAITLRELDGLSYEEIAAIMDCPVGTVRSRIFRAREA. The H-T-H motif DNA-binding region spans 156 to 175; it reads YEEIAAIMDCPVGTVRSRIF.

The protein belongs to the sigma-70 factor family. ECF subfamily. In terms of assembly, interacts transiently with the RNAP catalytic core formed by RpoA, RpoB, RpoC and RpoZ (2 alpha, 1 beta, 1 beta' and 1 omega subunit) to form the RNAP holoenzyme that can initiate transcription. Interacts 1:1 with anti-sigma-E factor RseA which prevents binding to RNAP catalytic core.

The protein resides in the cytoplasm. Its activity is regulated as follows. ECF sigma-E is held in an inactive form by its cognate anti-sigma factor (RseA) until released by regulated intramembrane proteolysis (RIP). RIP occurs when an extracytoplasmic signal (periplasmic, acid or heat stress) triggers a concerted proteolytic cascade to transmit information and elicit cellular responses. In S.typhimurium there are 2 cascades, the heat shock response which depends on DegS and RseP, and acid response which depends only on RseP. The anti-sigma factor RseA is an inner membrane protein, binding sigma-E in the cytoplasm and RseB in the periplasm. RseA is first cut extracytoplasmically (site-1 protease, S1P, by DegS), then within the membrane itself (site-2 protease, S2P, by RseP), while cytoplasmic proteases (predominantly ClpX-ClpP) finish degrading the regulatory protein, liberating sigma-E. Degradation of RseA requires 2 signals to activate DegS; an outer membrane protein (OMP) signal activates DegS, while an LPS signal causes release of RseB from RseA, freeing RseA to be cleaved. OMP stress can be abrogated by overexpression of the sRNA rybB. Its function is as follows. Sigma factors are initiation factors that promote the attachment of RNA polymerase (RNAP) to specific initiation sites and are then released. Extracytoplasmic function (ECF) sigma-E controls the envelope stress response, responding to periplasmic protein stress, increased levels of periplasmic lipopolysaccharide (LPS) as well as acid stress, heat shock and oxidative stress; it controls protein processing in the extracytoplasmic compartment. The protein is ECF RNA polymerase sigma-E factor (rpoE) of Salmonella typhimurium (strain 14028s / SGSC 2262).